Consider the following 146-residue polypeptide: 3-hydroxyacyl-[acyl-carrier-protein] dehydratase FabZ (146 aa).

His49 is a catalytic residue.

Belongs to the thioester dehydratase family. FabZ subfamily.

The protein resides in the cytoplasm. It catalyses the reaction a (3R)-hydroxyacyl-[ACP] = a (2E)-enoyl-[ACP] + H2O. In terms of biological role, involved in unsaturated fatty acids biosynthesis. Catalyzes the dehydration of short chain beta-hydroxyacyl-ACPs and long chain saturated and unsaturated beta-hydroxyacyl-ACPs. This chain is 3-hydroxyacyl-[acyl-carrier-protein] dehydratase FabZ, found in Pseudomonas entomophila (strain L48).